Reading from the N-terminus, the 447-residue chain is N-succinylarginine dihydrolase (447 aa).

Residues 19–28 (AGLSVGNKAS), N110, and 137–138 (HR) each bind substrate. E174 is an active-site residue. R213 provides a ligand contact to substrate. Residue H249 is part of the active site. Substrate-binding residues include D251 and N365. C371 acts as the Nucleophile in catalysis.

The protein belongs to the succinylarginine dihydrolase family. In terms of assembly, homodimer.

The catalysed reaction is N(2)-succinyl-L-arginine + 2 H2O + 2 H(+) = N(2)-succinyl-L-ornithine + 2 NH4(+) + CO2. The protein operates within amino-acid degradation; L-arginine degradation via AST pathway; L-glutamate and succinate from L-arginine: step 2/5. Catalyzes the hydrolysis of N(2)-succinylarginine into N(2)-succinylornithine, ammonia and CO(2). This Photorhabdus laumondii subsp. laumondii (strain DSM 15139 / CIP 105565 / TT01) (Photorhabdus luminescens subsp. laumondii) protein is N-succinylarginine dihydrolase.